We begin with the raw amino-acid sequence, 846 residues long: Translation initiation factor IF-2 (846 aa).

The tract at residues 198–219 (YKREEEEKKSKAKKAGGKGFKK) is disordered. Residues 207–219 (SKAKKAGGKGFKK) are compositionally biased toward basic residues. The region spanning 345 to 512 (SRAPVVTIMG…AVLLQSEVLE (168 aa)) is the tr-type G domain. Residues 354–361 (GHVDHGKT) form a G1 region. Position 354 to 361 (354 to 361 (GHVDHGKT)) interacts with GTP. A G2 region spans residues 379–383 (GITQH). Residues 400-403 (DTPG) are G3. GTP is bound by residues 400-404 (DTPGH) and 454-457 (NKID). Residues 454–457 (NKID) form a G4 region. Residues 490 to 492 (SAK) are G5.

It belongs to the TRAFAC class translation factor GTPase superfamily. Classic translation factor GTPase family. IF-2 subfamily.

It localises to the cytoplasm. Functionally, one of the essential components for the initiation of protein synthesis. Protects formylmethionyl-tRNA from spontaneous hydrolysis and promotes its binding to the 30S ribosomal subunits. Also involved in the hydrolysis of GTP during the formation of the 70S ribosomal complex. The chain is Translation initiation factor IF-2 from Francisella tularensis subsp. holarctica (strain OSU18).